The following is a 321-amino-acid chain: Coiled-coil domain-containing protein 42-like 1 (321 aa).

Coiled coils occupy residues 36–144 (IRRL…EKCH) and 202–229 (IVQF…WELR).

The protein belongs to the CFAP73 family.

This chain is Coiled-coil domain-containing protein 42-like 1, found in Xenopus laevis (African clawed frog).